A 201-amino-acid polypeptide reads, in one-letter code: Recombination protein RecR (201 aa).

The segment at 60–75 (CKKCFNLTSEDECEIC) adopts a C4-type zinc-finger fold. One can recognise a Toprim domain in the interval 83-177 (KLICVVAETK…KVTRIAYGLP (95 aa)).

This sequence belongs to the RecR family.

Functionally, may play a role in DNA repair. It seems to be involved in an RecBC-independent recombinational process of DNA repair. It may act with RecF and RecO. The chain is Recombination protein RecR from Prochlorococcus marinus (strain MIT 9215).